Consider the following 260-residue polypeptide: Proliferating cell nuclear antigen (260 aa).

The DNA-binding element occupies 61-80 (RCDRNLAMGVNLSSMSKILK). A Glycyl lysine isopeptide (Lys-Gly) (interchain with G-Cter in ubiquitin) cross-link involves residue Lys164.

It belongs to the PCNA family. As to quaternary structure, homotrimer. Forms a complex with activator 1 heteropentamer in the presence of ATP. Component of the replisome complex. In terms of processing, monoubiquitinated by the ube2b-rad18 complex on Lys-164. Monoubiquitination at Lys-164 also takes place in undamaged proliferating cells, and is mediated by the dcx(dtl) complex, leading to enhance PCNA-dependent translesion DNA synthesis.

It localises to the nucleus. Functionally, this protein is an auxiliary protein of DNA polymerase delta and is involved in the control of eukaryotic DNA replication by increasing the polymerase's processibility during elongation of the leading strand. This is Proliferating cell nuclear antigen (pcna) from Haplochromis burtoni (Burton's mouthbrooder).